Here is a 544-residue protein sequence, read N- to C-terminus: Probable acyl-activating enzyme 8 (544 aa).

This sequence belongs to the ATP-dependent AMP-binding enzyme family. In terms of tissue distribution, expressed at low levels in roots, leaves, stems, flowers and developing seeds.

In terms of biological role, may act as an acid--thiol ligase that activates carboxylic acids by forming acyl-CoAs. The protein is Probable acyl-activating enzyme 8 (AAE8) of Arabidopsis thaliana (Mouse-ear cress).